The following is a 665-amino-acid chain: Fructose-1,6-bisphosphatase class 3 (665 aa).

The protein belongs to the FBPase class 3 family. Requires Mn(2+) as cofactor.

The catalysed reaction is beta-D-fructose 1,6-bisphosphate + H2O = beta-D-fructose 6-phosphate + phosphate. The protein operates within carbohydrate biosynthesis; gluconeogenesis. This chain is Fructose-1,6-bisphosphatase class 3, found in Clostridium acetobutylicum (strain ATCC 824 / DSM 792 / JCM 1419 / IAM 19013 / LMG 5710 / NBRC 13948 / NRRL B-527 / VKM B-1787 / 2291 / W).